A 154-amino-acid polypeptide reads, in one-letter code: Endoribonuclease YbeY (154 aa).

The Zn(2+) site is built by His-114, His-118, and His-124.

This sequence belongs to the endoribonuclease YbeY family. Zn(2+) is required as a cofactor.

The protein resides in the cytoplasm. Its function is as follows. Single strand-specific metallo-endoribonuclease involved in late-stage 70S ribosome quality control and in maturation of the 3' terminus of the 16S rRNA. The protein is Endoribonuclease YbeY of Haemophilus influenzae (strain ATCC 51907 / DSM 11121 / KW20 / Rd).